Here is a 2078-residue protein sequence, read N- to C-terminus: Nascent polypeptide-associated complex subunit alpha, muscle-specific form (2078 aa).

Disordered regions lie at residues 1–21 (MPGE…QPQA), 37–96 (ALGQ…LGTA), 595–614 (LGEP…PLGV), and 732–1944 (KSVP…KAMS). Polar residues-rich tracts occupy residues 9 to 21 (VPAT…QPQA) and 60 to 75 (AANQ…TIAS). Residues 775-786 (SGASATASSKGT) are compositionally biased toward low complexity. Positions 837–847 (PENSLSFQGSK) are enriched in polar residues. The residue at position 917 (serine 917) is a Phosphoserine. The segment covering 933 to 1020 (SPSPKGAPTP…PPAVTPPSPK (88 aa)) has biased composition (pro residues). Residues 1045-1067 (GSPAATPLPKGAPTTPAATLPSP) are compositionally biased toward low complexity. Residues 1080-1113 (PTPPAATPPSPKGGPATPSPKGAPMPPAATPPSP) are compositionally biased toward pro residues. Low complexity predominate over residues 1114-1130 (KGGLATPPHKGAPTTPA). 2 stretches are compositionally biased toward pro residues: residues 1131 to 1147 (ATPP…PPKG) and 1154 to 1170 (ATPP…PPKG). At serine 1181 the chain carries Phosphoserine. 3 stretches are compositionally biased toward low complexity: residues 1183 to 1199 (KGGL…TTPA), 1206 to 1222 (KGGL…TTPA), and 1229 to 1245 (KGGL…TTPA). Pro residues-rich tracts occupy residues 1246–1270 (ATPP…PAAT) and 1292–1344 (VTPP…PSPK). Residues 1345–1366 (GTPTLPATTPSSKGGPTTPSSK) show a composition bias toward low complexity. A phosphoserine mark is found at serine 1397 and serine 1474. Positions 1470 to 1481 (VTPPSPKEPPAP) are enriched in pro residues. Residues 1485-1507 (ATSSSPKKAPATPAPMGAPTLPA) show a composition bias toward low complexity. The span at 1611–1625 (KEAPTPPAVTPPSPE) shows a compositional bias: pro residues. Residues 1626–1637 (KGPATPAPKGTP) are compositionally biased toward low complexity. Polar residues predominate over residues 1647–1656 (LKDSPTSPAS). The segment covering 1744 to 1756 (DSSKTAKGKDASH) has biased composition (basic and acidic residues). A compositionally biased stretch (pro residues) spans 1794-1811 (PSPPVSLPLAPSPVPTLP). Positions 1841 to 1845 (LPLIP) match the PXLXP motif. The segment covering 1876 to 1891 (SAKQPVTKNNKGSGTE) has biased composition (polar residues). Over residues 1892 to 1905 (SDSDESVPELEEQD) the composition is skewed to acidic residues. Serine 1906 is subject to Phosphoserine; by ILK1. Residues 1907 to 1920 (TQATTQQAQLAAAA) are compositionally biased toward low complexity. Residues 1932–1943 (QSRSEKKARKAM) are required for DNA-binding. One can recognise an NAC-A/B domain in the interval 1933-1998 (SRSEKKARKA…AKIEDLSQQA (66 aa)). The residue at position 1995 (serine 1995) is a Phosphoserine. Lysine 2005 is modified (N6-acetyllysine; alternate). Residue lysine 2005 forms a Glycyl lysine isopeptide (Lys-Gly) (interchain with G-Cter in SUMO2); alternate linkage. Threonine 2022 bears the Phosphothreonine; by GSK3-beta mark. At threonine 2024 the chain carries Phosphothreonine. 4 positions are modified to phosphoserine: serine 2029, serine 2049, serine 2054, and serine 2066. A UBA domain is found at 2039–2078 (VEVKDIELVMSQANVSRAKAVRALKNNSNDIVNAIMELTM).

In terms of assembly, interacts (via PXLXP motif) with the muscle-restricted histone methyltransferase SMYD1 (via MYND-type zinc finger).

It is found in the cytoplasm. The protein localises to the nucleus. Cardiac- and muscle-specific transcription factor. May act to regulate the expression of genes involved in the development of myotubes. Plays a critical role in ventricular cardiomyocyte expansion and regulates postnatal skeletal muscle growth and regeneration. Involved in the organized assembly of thick and thin filaments of myofibril sarcomeres. The protein is Nascent polypeptide-associated complex subunit alpha, muscle-specific form (NACA) of Homo sapiens (Human).